The chain runs to 309 residues: Homoserine kinase (309 aa).

ATP is bound at residue 95-105; the sequence is PQSRGLGSSAA.

Belongs to the GHMP kinase family. Homoserine kinase subfamily.

It is found in the cytoplasm. The catalysed reaction is L-homoserine + ATP = O-phospho-L-homoserine + ADP + H(+). It functions in the pathway amino-acid biosynthesis; L-threonine biosynthesis; L-threonine from L-aspartate: step 4/5. Its function is as follows. Catalyzes the ATP-dependent phosphorylation of L-homoserine to L-homoserine phosphate. This is Homoserine kinase from Corynebacterium efficiens (strain DSM 44549 / YS-314 / AJ 12310 / JCM 11189 / NBRC 100395).